Reading from the N-terminus, the 462-residue chain is ATP synthase subunit beta (462 aa).

151-158 (GGAGVGKT) is a binding site for ATP.

Belongs to the ATPase alpha/beta chains family. In terms of assembly, F-type ATPases have 2 components, CF(1) - the catalytic core - and CF(0) - the membrane proton channel. CF(1) has five subunits: alpha(3), beta(3), gamma(1), delta(1), epsilon(1). CF(0) has three main subunits: a(1), b(2) and c(9-12). The alpha and beta chains form an alternating ring which encloses part of the gamma chain. CF(1) is attached to CF(0) by a central stalk formed by the gamma and epsilon chains, while a peripheral stalk is formed by the delta and b chains.

It is found in the cell inner membrane. It catalyses the reaction ATP + H2O + 4 H(+)(in) = ADP + phosphate + 5 H(+)(out). Its function is as follows. Produces ATP from ADP in the presence of a proton gradient across the membrane. The catalytic sites are hosted primarily by the beta subunits. This Chlorobaculum parvum (strain DSM 263 / NCIMB 8327) (Chlorobium vibrioforme subsp. thiosulfatophilum) protein is ATP synthase subunit beta.